The following is a 145-amino-acid chain: MLPAISKSVLSLDVGKRRIGIAGCDPLGITITQLEAIKRTTFNNEATQLRQLCDLRDVRGIIIGLPLSDLGKETKQSSYCYTYGINIAKELNLPLAWVNEHSSTWEAGQRFKLQNDRSGKLDSAAAALLLEQWLTEGPELEFLKN.

This sequence belongs to the YqgF nuclease family.

The protein localises to the cytoplasm. Could be a nuclease involved in processing of the 5'-end of pre-16S rRNA. The protein is Putative pre-16S rRNA nuclease of Prochlorococcus marinus (strain MIT 9211).